Reading from the N-terminus, the 248-residue chain is Probable transcriptional regulatory protein PSPA7_4544 (248 aa).

Belongs to the TACO1 family.

The protein localises to the cytoplasm. This chain is Probable transcriptional regulatory protein PSPA7_4544, found in Pseudomonas paraeruginosa (strain DSM 24068 / PA7) (Pseudomonas aeruginosa (strain PA7)).